The primary structure comprises 394 residues: Phosphoglycerate kinase (394 aa).

Substrate contacts are provided by residues Asp-21 to Asn-23, Arg-36, His-59 to Arg-62, Arg-118, and Arg-151. A Phosphoserine modification is found at Ser-183. 2 residues coordinate ATP: Lys-201 and Gly-292. Position 299 is a phosphothreonine (Thr-299). Residues Glu-323 and Gly-350–Ser-353 contribute to the ATP site.

Belongs to the phosphoglycerate kinase family. In terms of assembly, monomer.

The protein localises to the cytoplasm. The catalysed reaction is (2R)-3-phosphoglycerate + ATP = (2R)-3-phospho-glyceroyl phosphate + ADP. Its pathway is carbohydrate degradation; glycolysis; pyruvate from D-glyceraldehyde 3-phosphate: step 2/5. The protein is Phosphoglycerate kinase of Bacillus cereus (strain Q1).